We begin with the raw amino-acid sequence, 592 residues long: Beta-fructofuranosidase, insoluble isoenzyme 1 (592 aa).

The N-terminal stretch at 1-39 (MGVTIRNRNYDHGSLPFLQSLLAILLVTTTTLHINGVEA) is a signal peptide. A propeptide spanning residues 40–48 (FHEIHYNLQ) is cleaved from the precursor. Residue Asp-74 is part of the active site. An N-linked (GlcNAc...) (complex) asparagine glycan is attached at Asn-170. Asn-195 is a glycosylation site (N-linked (GlcNAc...) asparagine). Asn-311 carries N-linked (GlcNAc...) (complex) asparagine glycosylation. N-linked (GlcNAc...) (high mannose) asparagine glycosylation occurs at Asn-348. Asn-570 is a glycosylation site (N-linked (GlcNAc...) asparagine).

Belongs to the glycosyl hydrolase 32 family. As to expression, in leaves and roots of young plants.

The protein localises to the secreted. It localises to the cell wall. The catalysed reaction is Hydrolysis of terminal non-reducing beta-D-fructofuranoside residues in beta-D-fructofuranosides.. Functionally, may play an important role in phloem unloading and in stress response. The chain is Beta-fructofuranosidase, insoluble isoenzyme 1 (INV1) from Daucus carota (Wild carrot).